Here is a 521-residue protein sequence, read N- to C-terminus: 4-cresol dehydrogenase [hydroxylating] flavoprotein subunit (521 aa).

Positions 54-268 (AAHAPSAAVT…VEIVDALRPL (215 aa)) constitute an FAD-binding PCMH-type domain. The residue at position 384 (Y384) is an O-8alpha-FAD tyrosine.

In terms of assembly, tetramer of two cytochrome subunits and two flavoprotein subunits. It depends on FAD as a cofactor.

The catalysed reaction is 4-methylphenol + 4 oxidized [azurin] + H2O = 4 reduced [azurin] + 4-hydroxybenzaldehyde + 4 H(+). The protein operates within aromatic compound metabolism; p-cresol degradation. Its function is as follows. Catalyzes the azurin dependent hydroxylation of the methyl group of 4-methylphenol to form 4-hydroxybenzaldehyde. The sequence is that of 4-cresol dehydrogenase [hydroxylating] flavoprotein subunit (pchF) from Pseudomonas putida (Arthrobacter siderocapsulatus).